The sequence spans 27 residues: Phospholipase A2 P-elapitoxin-Aa1a alpha chain (27 aa).

This sequence belongs to the phospholipase A2 family. Group I subfamily. As to quaternary structure, heterotrimer of alpha, beta and gamma chains, each related to PLA2. It depends on Ca(2+) as a cofactor. In terms of tissue distribution, expressed by the venom gland.

The protein localises to the secreted. It catalyses the reaction a 1,2-diacyl-sn-glycero-3-phosphocholine + H2O = a 1-acyl-sn-glycero-3-phosphocholine + a fatty acid + H(+). Its function is as follows. Heterotrimer: presynaptic neurotoxin. Inhibits nerve-evoked twitch contractions but not responses to cholinergic agonists acetylcholine and carbachol and to depolarizing agonist KCl. Causes a fade in tetanic contractions. Displays a triphasic mode of action with depression, enhancement and blockade of neurotransmission. Does not display myotoxic activity such as changes in baseline muscle tension or inhibition of directly stimulated muscle twitches. All subunits are necessary for maximum toxicity. Monomer: Snake venom phospholipase A2 (PLA2) alpha chain that has enzymatic activity. PLA2 catalyzes the calcium-dependent hydrolysis of the 2-acyl groups in 3-sn-phosphoglycerides. This is Phospholipase A2 P-elapitoxin-Aa1a alpha chain from Acanthophis antarcticus (Common death adder).